Reading from the N-terminus, the 336-residue chain is Probable G-protein coupled receptor 160 (336 aa).

The Extracellular portion of the chain corresponds to 1–20 (MTALSSKNCSLQYQLHQSPQ). N-linked (GlcNAc...) asparagine glycosylation is present at Asn8. Residues 21–41 (LLEASCLLFLIILGKVLLNIL) form a helical membrane-spanning segment. At 42–56 (LLRVRRGDARWTLME) the chain is on the cytoplasmic side. Residues 57–77 (YFCFSLALVDLLLLVNISILT) form a helical membrane-spanning segment. Topologically, residues 78 to 95 (YFRDFVVLGIRFTRYHIC) are extracellular. A helical transmembrane segment spans residues 96–116 (LLTQIISFTYGFLHYPVCSLA). Topologically, residues 117–136 (CIDYWCNLSRASKQSSRWQK) are cytoplasmic. Residues 137–157 (LLYFLTVILTWISVLAYVLVD) form a helical membrane-spanning segment. Residues 158-186 (PAISVSLKAHRGYVYQCPAYVSTQSHWLS) lie on the Extracellular side of the membrane. A helical transmembrane segment spans residues 187-207 (LSMLMVLFVAFLISWQEVVAL). Topologically, residues 208-243 (LQAMRIASYKSKAALYFPFPLHCGYALSCREALLPR) are cytoplasmic. The helical transmembrane segment at 244 to 264 (LIVCFLGTWFPFVALQVLILS) threads the bilayer. Over 265-272 (LRVQIPAY) the chain is Extracellular. The helical transmembrane segment at 273-293 (IEMNVPWLYFVNSFLIAAVYW) threads the bilayer. The Cytoplasmic portion of the chain corresponds to 294 to 336 (FNCHKLDLRDSSLPVDPFINWKCCFVPVHRLKQVERPMSIVIC).

The protein belongs to the G-protein coupled receptor 1 family.

Its subcellular location is the cell membrane. In terms of biological role, orphan receptor. The sequence is that of Probable G-protein coupled receptor 160 (Gpr160) from Mus musculus (Mouse).